The following is a 352-amino-acid chain: Peptide chain release factor 1 (352 aa).

Glutamine 233 carries the N5-methylglutamine modification. The interval 288–309 (NAKDRKEQVGSGDRSERIRTYN) is disordered. The segment covering 289-306 (AKDRKEQVGSGDRSERIR) has biased composition (basic and acidic residues).

Belongs to the prokaryotic/mitochondrial release factor family. Methylated by PrmC. Methylation increases the termination efficiency of RF1.

The protein localises to the cytoplasm. Peptide chain release factor 1 directs the termination of translation in response to the peptide chain termination codons UAG and UAA. The chain is Peptide chain release factor 1 from Helicobacter acinonychis (strain Sheeba).